The sequence spans 198 residues: HTH-type transcriptional regulator BetI (198 aa).

The 61-residue stretch at 8-68 folds into the HTH tetR-type domain; that stretch reads PIRRQQLIEA…ATMRYLIRHL (61 aa). Positions 31–50 form a DNA-binding region, H-T-H motif; it reads SIAQIAKRAGVSNGIISHYF.

It participates in amine and polyamine biosynthesis; betaine biosynthesis via choline pathway [regulation]. Functionally, repressor involved in the biosynthesis of the osmoprotectant glycine betaine. It represses transcription of the choline transporter BetT and the genes of BetAB involved in the synthesis of glycine betaine. This Yersinia pseudotuberculosis serotype O:1b (strain IP 31758) protein is HTH-type transcriptional regulator BetI.